Here is a 224-residue protein sequence, read N- to C-terminus: MLTSEISESEKPREKLQNYGIEALSSSELVALIIETGTKNESVLTIANRIIMKFKHVAEMQYASIEEFQLVNGIGVAKASKIMAAIELGRRISIVTNQEEIVIRCPDDAVKLVMPELAFLFQEHFHCIFLNTKNQVIYRQTIFVGGLNASIVHPREVFRLALRKSSAAIMCFHNHPSGDPTPSSEDLLVTKRLVEAGNIIGITLLDHIIIGKNKYISLKEKGYF.

The 123-residue stretch at 102-224 (VIRCPDDAVK…YISLKEKGYF (123 aa)) folds into the MPN domain. Zn(2+)-binding residues include H173, H175, and D186. Positions 173-186 (HNHPSGDPTPSSED) match the JAMM motif motif.

The protein belongs to the UPF0758 family.

The sequence is that of UPF0758 protein lwe1562 from Listeria welshimeri serovar 6b (strain ATCC 35897 / DSM 20650 / CCUG 15529 / CIP 8149 / NCTC 11857 / SLCC 5334 / V8).